The primary structure comprises 74 residues: Serine rich endogenous peptide 23 (74 aa).

The signal sequence occupies residues 1–25; sequence MNKVVVYVLALSILLFFGLPNTTLA. An SCOOP motif motif is present at residues 52–66; sequence KIAVGGSDSVRAHSK. The short motif at 58 to 60 is the SxS motif essential for MIK2 binding element; that stretch reads SDS.

Belongs to the serine rich endogenous peptide (SCOOP) phytocytokine family. Interacts with MIK2 (via extracellular leucine-rich repeat domain); this interaction triggers the formation of complex between MIK2 and the BAK1/SERK3 and SERK4 coreceptors, and subsequent BAK1 activation by phosphorylation. Mostly expressed in roots, and, to a lower extent, in seedlings shoots.

The protein localises to the cell membrane. It is found in the secreted. It localises to the extracellular space. The protein resides in the apoplast. Its function is as follows. Brassicaceae-specific phytocytokine (plant endogenous peptide released into the apoplast) perceived by MIK2 in a BAK1/SERK3 and SERK4 coreceptors-dependent manner, that modulates various physiological and antimicrobial processes including growth prevention and reactive oxygen species (ROS) response regulation. Inhibits root growth. This chain is Serine rich endogenous peptide 23, found in Arabidopsis thaliana (Mouse-ear cress).